The primary structure comprises 248 residues: 2,3-bisphosphoglycerate-dependent phosphoglycerate mutase (248 aa).

Residues 8 to 15 (RHGESTWN), 21 to 22 (TG), Arg-60, 87 to 90 (EKHY), Lys-98, 114 to 115 (RR), and 183 to 184 (GN) contribute to the substrate site. The active-site Tele-phosphohistidine intermediate is the His-9. Glu-87 serves as the catalytic Proton donor/acceptor.

Belongs to the phosphoglycerate mutase family. BPG-dependent PGAM subfamily.

It carries out the reaction (2R)-2-phosphoglycerate = (2R)-3-phosphoglycerate. It functions in the pathway carbohydrate degradation; glycolysis; pyruvate from D-glyceraldehyde 3-phosphate: step 3/5. Functionally, catalyzes the interconversion of 2-phosphoglycerate and 3-phosphoglycerate. In Elusimicrobium minutum (strain Pei191), this protein is 2,3-bisphosphoglycerate-dependent phosphoglycerate mutase.